Here is a 356-residue protein sequence, read N- to C-terminus: Staphylococcal superantigen-like 3 (356 aa).

The signal sequence occupies residues 1–30; sequence MKMRTIAKTSLALGLLTTGAITVTTQSVKA. The tract at residues 61–165 is disordered; that stretch reads ATTQAANTRQ…TIKQAQTDMT (105 aa). Basic and acidic residues predominate over residues 69–104; that stretch reads RQERTPKLEKAPNTNEEKTSASKIEKISQPKQEEQK. The segment covering 114-141 has biased composition (low complexity); it reads PKQEQSQTTTESTTPKTKVTTPPSTNTP. Polar residues predominate over residues 142–164; that stretch reads QPMQSTKSDTPQSPTIKQAQTDM. A sialyl Lewis X-binding region spans residues 228-326; sequence IDVFIVLEDN…VIKMKNGGKY (99 aa).

Belongs to the staphylococcal/streptococcal toxin family. In terms of assembly, interacts with host TLR2 (via its extracellular domain).

It localises to the secreted. Functionally, secreted protein that plays an essential role in immune innate response inhibition by interacting with and inhibiting host TLR2. In turn, bacteria recognition by immune cells is impaired and cytokine production is inhibited. Mechanistically, by interacting with TLR2, blocks ligand binding and thus inhibits activation. Second, by interacting with an already formed TLR2-lipopeptide complex, prevents TLR heterodimerization and downstream signaling. The interaction with host TLR2 does not involve sialyl Lewis X interactions. In Staphylococcus aureus (strain NCTC 8325 / PS 47), this protein is Staphylococcal superantigen-like 3.